The following is a 121-amino-acid chain: UPF0295 protein ABC1323 (121 aa).

The next 2 helical transmembrane spans lie at threonine 14 to lysine 34 and valine 41 to isoleucine 61.

It belongs to the UPF0295 family.

It localises to the cell membrane. The chain is UPF0295 protein ABC1323 from Shouchella clausii (strain KSM-K16) (Alkalihalobacillus clausii).